We begin with the raw amino-acid sequence, 509 residues long: Histidine ammonia-lyase (509 aa).

The segment at residues 144–146 (ASG) is a cross-link (5-imidazolinone (Ala-Gly)). Residue Ser-145 is modified to 2,3-didehydroalanine (Ser).

The protein belongs to the PAL/histidase family. In terms of processing, contains an active site 4-methylidene-imidazol-5-one (MIO), which is formed autocatalytically by cyclization and dehydration of residues Ala-Ser-Gly.

Its subcellular location is the cytoplasm. The catalysed reaction is L-histidine = trans-urocanate + NH4(+). It functions in the pathway amino-acid degradation; L-histidine degradation into L-glutamate; N-formimidoyl-L-glutamate from L-histidine: step 1/3. The sequence is that of Histidine ammonia-lyase from Rhodospirillum centenum (strain ATCC 51521 / SW).